The sequence spans 331 residues: 6-phosphogluconolactonase (331 aa).

This sequence belongs to the cycloisomerase 2 family.

It catalyses the reaction 6-phospho-D-glucono-1,5-lactone + H2O = 6-phospho-D-gluconate + H(+). It participates in carbohydrate degradation; pentose phosphate pathway; D-ribulose 5-phosphate from D-glucose 6-phosphate (oxidative stage): step 2/3. In terms of biological role, catalyzes the hydrolysis of 6-phosphogluconolactone to 6-phosphogluconate. The sequence is that of 6-phosphogluconolactonase from Serratia proteamaculans (strain 568).